A 542-amino-acid chain; its full sequence is MSTELQSELIQAVELRRNFAIISHPDAGKTTLTEKLLLYGGAIHEAGAVKARRAQRKATSDWMAMEQQRGISITSTVLQFEYQKCQINLLDTPGHQDFSEDTYRTLAAADNAVMLIDAAKGLEPQTRKLFEVCKLRGIPIFTFINKLDRPGREPLELLDEIEQELGLQTYAVNWPIGMGDRFKGVFDRHKQQIHLFERSAHGSREARDTIVELGDPRIEEKLEQSLYYQLKNDLELLEGVGPELDLQLVHEGKMTPVFFGSAMTNFGVELFLKYFLEYALKPGSHYSSVGEVAPTYPEFSGFVFKLQANMDPKHRDRVAFIRVCTGKFEKDMMVNHARIGKLIRLSRPQKLFAQERESIDVAYPGDVIGLNNPGVFAIGDTIYTGQKLEYEGIPYFSPELFASLRNPNPSKSKQFQKGVAELREEGAVQIMYSTDEAKRDPILAAVGQLQFEVVQFRLQNEYGVETILDLLPYSVARWVEGGWEALEKVGRIFNTTTVKDSMGRPVLLFRNEWNCQQLLGDHPELKLSAIAPVFSSQQPVEE.

A tr-type G domain is found at 14–283 (ELRRNFAIIS…YFLEYALKPG (270 aa)). GTP is bound by residues 23-30 (SHPDAGKT), 91-95 (DTPGH), and 145-148 (NKLD).

It belongs to the TRAFAC class translation factor GTPase superfamily. Classic translation factor GTPase family. PrfC subfamily.

Its subcellular location is the cytoplasm. Functionally, increases the formation of ribosomal termination complexes and stimulates activities of RF-1 and RF-2. It binds guanine nucleotides and has strong preference for UGA stop codons. It may interact directly with the ribosome. The stimulation of RF-1 and RF-2 is significantly reduced by GTP and GDP, but not by GMP. This chain is Peptide chain release factor 3, found in Nostoc punctiforme (strain ATCC 29133 / PCC 73102).